We begin with the raw amino-acid sequence, 197 residues long: Glycerol-3-phosphate acyltransferase (197 aa).

A run of 5 helical transmembrane segments spans residues 1-21 (MNILIIFASYLLGSLPTGFLI), 78-98 (LIEVIAGISAISGHIWPIWLG), 111-131 (MFLALSWKVGLASLGIFLIVL), 136-155 (FVSLSSISAAILLPIFMFFY), and 159-176 (FIHTYFFISLIVALLVIW).

The protein belongs to the PlsY family. In terms of assembly, probably interacts with PlsX.

It is found in the cell inner membrane. The enzyme catalyses an acyl phosphate + sn-glycerol 3-phosphate = a 1-acyl-sn-glycero-3-phosphate + phosphate. It participates in lipid metabolism; phospholipid metabolism. Functionally, catalyzes the transfer of an acyl group from acyl-phosphate (acyl-PO(4)) to glycerol-3-phosphate (G3P) to form lysophosphatidic acid (LPA). This enzyme utilizes acyl-phosphate as fatty acyl donor, but not acyl-CoA or acyl-ACP. This Prochlorococcus marinus (strain MIT 9215) protein is Glycerol-3-phosphate acyltransferase.